The following is a 242-amino-acid chain: 6-carboxyhexanoate--CoA ligase (242 aa).

It belongs to the BioW family. Homodimer. Mg(2+) is required as a cofactor.

The enzyme catalyses heptanedioate + ATP + CoA = 6-carboxyhexanoyl-CoA + AMP + diphosphate. It functions in the pathway metabolic intermediate metabolism; pimeloyl-CoA biosynthesis; pimeloyl-CoA from pimelate: step 1/1. Functionally, catalyzes the transformation of pimelate into pimeloyl-CoA with concomitant hydrolysis of ATP to AMP. This is 6-carboxyhexanoate--CoA ligase from Veillonella parvula (strain ATCC 10790 / DSM 2008 / CCUG 5123 / JCM 12972 / NCTC 11810 / Te3) (Veillonella alcalescens).